The sequence spans 740 residues: Dynein regulatory complex protein 1 (740 aa).

The disordered stretch occupies residues 56–75 (GEYLDGKKESEEDQSKSYKQ). A coiled-coil region spans residues 101 to 387 (IDIREIHRRV…LQFKELQKAM (287 aa)). Residues 573–620 (EKASMEETSMGSELELAEQTEMEGAKEESLVEGEKEEEEETPPSPWDI) form a disordered region. Positions 595–605 (EGAKEESLVEG) are enriched in basic and acidic residues. Residues 691–724 (LTQRAKLLLENSSLEQRNTELQALLQQYLNSKIN) adopt a coiled-coil conformation.

This sequence belongs to the DRC1 family. Component of the nexin-dynein regulatory complex (N-DRC). Interacts with CCDC65/DRC2, DRC3, GAS8/DRC4 and TCTE1/DRC5.

It is found in the cytoplasm. It localises to the cytoskeleton. The protein localises to the cilium axoneme. Its subcellular location is the flagellum axoneme. In terms of biological role, component of the nexin-dynein regulatory complex (N-DRC) a key regulator of ciliary/flagellar motility which maintains the alignment and integrity of the distal axoneme and regulates microtubule sliding in motile axonemes. Plays a critical role in the assembly of N-DRC and also stabilizes the assembly of multiple inner dynein arms and radial spokes. Coassembles with CCDC65/DRC2 to form a central scaffold needed for assembly of the N-DRC and its attachment to the outer doublet microtubules. The polypeptide is Dynein regulatory complex protein 1 (DRC1) (Macaca fascicularis (Crab-eating macaque)).